Consider the following 792-residue polypeptide: Type 2 topoisomerase subunit B (792 aa).

The region spanning 423–537 (CEIFLVEGDS…EGYVYIAEPP (115 aa)) is the Toprim domain. Residues glutamate 429, aspartate 502, and aspartate 504 each coordinate Mg(2+).

The protein belongs to the type II topoisomerase GyrB family. As to quaternary structure, heterotetramer, composed of two GyrA and two GyrB chains. In the heterotetramer, 'GyrA' contains the active site tyrosine that forms a transient covalent intermediate with DNA, while 'GyrB' binds cofactors and catalyzes ATP hydrolysis. Mg(2+) serves as cofactor. It depends on Mn(2+) as a cofactor. Requires Ca(2+) as cofactor.

It is found in the cytoplasm. It carries out the reaction ATP-dependent breakage, passage and rejoining of double-stranded DNA.. A type II topoisomerase. Despite its similarity to DNA gyrase, this enzyme is not able to supercoil DNA, and instead acts like topoisomerase IV. Relaxes both positively and negatively supercoiled DNA in an ATP-dependent fashion, decatenates interlocked circles. If this subunit is reconstituted with GyrA from E.coli the hybrid enzyme supercoils relaxed plasmid DNA; if paired with E.coli ParC supercoiling is not restored. This the first bacteria shown to not contain DNA gyrase, although it has 2 copies of a reverse gyrase that introduces positive supercoils. Type II topoisomerases break and join 2 DNA strands simultaneously in an ATP-dependent manner. In Aquifex aeolicus (strain VF5), this protein is Type 2 topoisomerase subunit B.